The sequence spans 118 residues: Cobalt transport protein CbiN (118 aa).

A run of 2 helical transmembrane segments spans residues 7-27 and 70-90; these read INAL…VLGL and SALF…YFGL. Positions 99-118 are disordered; sequence ERASAASGAAAAPGDAPEGD. Positions 102-118 are enriched in low complexity; sequence SAASGAAAAPGDAPEGD.

This sequence belongs to the CbiN family. Forms an energy-coupling factor (ECF) transporter complex composed of an ATP-binding protein (A component, CbiO), a transmembrane protein (T component, CbiQ) and 2 possible substrate-capture proteins (S components, CbiM and CbiN) of unknown stoichimetry.

The protein resides in the cell membrane. It functions in the pathway cofactor biosynthesis; adenosylcobalamin biosynthesis. Part of the energy-coupling factor (ECF) transporter complex CbiMNOQ involved in cobalt import. In Streptomyces coelicolor (strain ATCC BAA-471 / A3(2) / M145), this protein is Cobalt transport protein CbiN.